The primary structure comprises 213 residues: Thymidylate kinase (213 aa).

Residue 10–17 coordinates ATP; it reads GLEGAGKT.

The protein belongs to the thymidylate kinase family.

It catalyses the reaction dTMP + ATP = dTDP + ADP. Phosphorylation of dTMP to form dTDP in both de novo and salvage pathways of dTTP synthesis. The polypeptide is Thymidylate kinase (Escherichia coli O6:H1 (strain CFT073 / ATCC 700928 / UPEC)).